We begin with the raw amino-acid sequence, 251 residues long: MHILLTNDDGYFAPGLQTLYTTLAEAGYDVFIVAPDSQKSATGHSITLFEPLFITKHSLDRGTGYAVSGKPADCVKLAIQGSIIPKPDLVISGINNGPNLGTDVFYSGTVSAAMEGVLLGVPAIAVSLASFSAVDYKPAAQFVALSLPKLRLGPGLININIPPLPEKEWKGVRVTKLGKAVYENVFEHRQAPYGRDYYWQAGTVSPEVDQETDLYAVQEGYVSITPMHSDLTDYIKLKELRQSLSLENPNK.

4 residues coordinate a divalent metal cation: Asp-8, Asp-9, Ser-40, and Asn-95.

This sequence belongs to the SurE nucleotidase family. It depends on a divalent metal cation as a cofactor.

It is found in the cytoplasm. It catalyses the reaction a ribonucleoside 5'-phosphate + H2O = a ribonucleoside + phosphate. Nucleotidase that shows phosphatase activity on nucleoside 5'-monophosphates. The chain is 5'-nucleotidase SurE from Desulfitobacterium hafniense (strain DSM 10664 / DCB-2).